The chain runs to 462 residues: tRNA-2-methylthio-N(6)-dimethylallyladenosine synthase (462 aa).

An MTTase N-terminal domain is found at 28 to 144 (KKLFVKTYGC…LPKMMEAVNA (117 aa)). The [4Fe-4S] cluster site is built by cysteine 37, cysteine 73, cysteine 107, cysteine 181, cysteine 185, and cysteine 188. The Radical SAM core domain occupies 167-398 (ATRGPTAFLT…QALLTQQQRA (232 aa)). The region spanning 401–462 (DAMVGRRVKV…KTNSLTGRLV (62 aa)) is the TRAM domain.

It belongs to the methylthiotransferase family. MiaB subfamily. In terms of assembly, monomer. [4Fe-4S] cluster serves as cofactor.

It localises to the cytoplasm. It catalyses the reaction N(6)-dimethylallyladenosine(37) in tRNA + (sulfur carrier)-SH + AH2 + 2 S-adenosyl-L-methionine = 2-methylsulfanyl-N(6)-dimethylallyladenosine(37) in tRNA + (sulfur carrier)-H + 5'-deoxyadenosine + L-methionine + A + S-adenosyl-L-homocysteine + 2 H(+). Its function is as follows. Catalyzes the methylthiolation of N6-(dimethylallyl)adenosine (i(6)A), leading to the formation of 2-methylthio-N6-(dimethylallyl)adenosine (ms(2)i(6)A) at position 37 in tRNAs that read codons beginning with uridine. This chain is tRNA-2-methylthio-N(6)-dimethylallyladenosine synthase, found in Jannaschia sp. (strain CCS1).